The sequence spans 500 residues: Bifunctional protein GlmU (500 aa).

A pyrophosphorylase region spans residues 1–242 (MPVQTAVVVL…SAKVAGANDR (242 aa)). Residues 10–13 (LAAG), Lys-24, Gln-81, and 86–87 (GT) contribute to the UDP-N-acetyl-alpha-D-glucosamine site. Asp-112 lines the Mg(2+) pocket. Residues Gly-151, Glu-167, Asn-182, and Asn-240 each coordinate UDP-N-acetyl-alpha-D-glucosamine. Mg(2+) is bound at residue Asn-240. The tract at residues 243–263 (VQLSRLAAELNRRTVENWMRA) is linker. The N-acetyltransferase stretch occupies residues 264-500 (GVTVVDPSTT…KQDLKDGIEQ (237 aa)). Residues Arg-345 and Lys-363 each contribute to the UDP-N-acetyl-alpha-D-glucosamine site. His-375 (proton acceptor) is an active-site residue. Residues Tyr-378 and Asn-389 each contribute to the UDP-N-acetyl-alpha-D-glucosamine site. Acetyl-CoA is bound by residues Ala-392, 398–399 (NY), Ser-417, and Ala-435. The disordered stretch occupies residues 472-500 (AEAAAAAGLHHSSDLHETEKQDLKDGIEQ). Positions 482–500 (HSSDLHETEKQDLKDGIEQ) are enriched in basic and acidic residues.

This sequence in the N-terminal section; belongs to the N-acetylglucosamine-1-phosphate uridyltransferase family. In the C-terminal section; belongs to the transferase hexapeptide repeat family. As to quaternary structure, homotrimer. Mg(2+) is required as a cofactor.

Its subcellular location is the cytoplasm. It carries out the reaction alpha-D-glucosamine 1-phosphate + acetyl-CoA = N-acetyl-alpha-D-glucosamine 1-phosphate + CoA + H(+). The catalysed reaction is N-acetyl-alpha-D-glucosamine 1-phosphate + UTP + H(+) = UDP-N-acetyl-alpha-D-glucosamine + diphosphate. Its pathway is nucleotide-sugar biosynthesis; UDP-N-acetyl-alpha-D-glucosamine biosynthesis; N-acetyl-alpha-D-glucosamine 1-phosphate from alpha-D-glucosamine 6-phosphate (route II): step 2/2. The protein operates within nucleotide-sugar biosynthesis; UDP-N-acetyl-alpha-D-glucosamine biosynthesis; UDP-N-acetyl-alpha-D-glucosamine from N-acetyl-alpha-D-glucosamine 1-phosphate: step 1/1. It participates in bacterial outer membrane biogenesis; LPS lipid A biosynthesis. Functionally, catalyzes the last two sequential reactions in the de novo biosynthetic pathway for UDP-N-acetylglucosamine (UDP-GlcNAc). The C-terminal domain catalyzes the transfer of acetyl group from acetyl coenzyme A to glucosamine-1-phosphate (GlcN-1-P) to produce N-acetylglucosamine-1-phosphate (GlcNAc-1-P), which is converted into UDP-GlcNAc by the transfer of uridine 5-monophosphate (from uridine 5-triphosphate), a reaction catalyzed by the N-terminal domain. The sequence is that of Bifunctional protein GlmU from Rhodococcus jostii (strain RHA1).